Here is a 2636-residue protein sequence, read N- to C-terminus: Ankyrin repeat and KH domain-containing protein CBG24701 (2636 aa).

ANK repeat units follow at residues 252–281, 286–317, 361–390, 435–464, 468–500, 505–534, 536–564, 566–595, 598–627, 632–661, and 665–695; these read SRITPLMEAAASSSEMIVELLLDYGMDPNA, NCNTALIYAAATDDRDMVEVILEHEGPHKVDV, NDNSPLIFAAMKGFLDIATVILDYQDKNQQ, NLPSPMMLACAGGFPELVEILLAAGARIDE, HKNTCLIEACDGVSGDQVSVVRMLLNRHADVNA, SGDTPMSLAARHGNIAIMKMLYEKGADLTT, KITPIVEASIETHLECVQFILAHCKTIPQ, QLSRALFAAAEGGCLKIVEELVRAGADLNF, DERTAIMKAARFNHFDIVQYLVYKGASVNF, NDATALSLACTYGNMDIAQFLIRNGADPML, and DGVNCFMEAAKHGSFDLMKLLVEFTKGNMDL. 3 disordered regions span residues 994 to 1030, 1172 to 1191, and 1230 to 1268; these read PIDAHQSNPPPAQQTGPKTTSLTTPQPDESNGATTIE, KSNRDKGSQQLKAAEQKKGK, and NNTQVQQQQGQQQQGQLRRTHSEGDGTERAKARSNVIDK. Over residues 1006–1030 the composition is skewed to polar residues; that stretch reads QQTGPKTTSLTTPQPDESNGATTIE. The span at 1233-1245 shows a compositional bias: low complexity; the sequence is QVQQQQGQQQQGQ. Residues 1249–1260 are compositionally biased toward basic and acidic residues; that stretch reads THSEGDGTERAK. ANK repeat units lie at residues 1273–1302, 1306–1335, 1340–1369, 1373–1402, 1408–1437, 1447–1476, 1480–1509, 1515–1546, 1548–1577, and 1581–1610; these read TLETPLSIACSNGHREVVELLLKEGANIEH, KGFTPLIIAATYGHAPIVEVLLKNHAAIEA, TKDTALSLACTAGRKDVVEMLLAHGANKEH, SDYTPLSLASSSGFLDIVNLLLTAGSEINS, LGISPLMLAAMNGHKETTKVLLEKGSDINA, YRNTALTLASFQGRFEVVKLLLCYNANVEH, TGLTPLMECASGGYVDVGNLLIENGADPNA, TKDTALTIAAEKGHEKFVQMLLDNDVIYDIRN, KGCSALWLACNGGHLGTAQALVFKGADTDM, and RKMSPMVAAFRKGHIEIIKFLVGHAKQFPN. Positions 1638-1696 form a coiled coil; the sequence is RNAKKAQAETAEETANRLLQLIDDEKERDINKKQKIKDKKKQKKEAKKKFQAEQEQLSA. Residues 1669–1857 are disordered; it reads KKQKIKDKKK…SSISERQHSW (189 aa). Over residues 1670–1686 the composition is skewed to basic residues; the sequence is KQKIKDKKKQKKEAKKK. The span at 1698 to 1708 shows a compositional bias: pro residues; the sequence is PSKPEPVVAPE. The span at 1709–1722 shows a compositional bias: acidic residues; the sequence is PEPEPETEPVEEPA. Residues 1811-1829 show a composition bias toward basic and acidic residues; the sequence is DWQKAGKEGKKVRPKREGR. Positions 1832 to 1851 are enriched in polar residues; the sequence is APSSAGSSQAKHRSNTSSIS. Residues 1864–1929 enclose the KH domain; it reads VKAYEFTVPG…DVVSMAVNII (66 aa). Disordered stretches follow at residues 1980 to 2182, 2196 to 2221, 2269 to 2292, 2301 to 2320, 2352 to 2417, 2444 to 2465, and 2539 to 2636; these read SASI…SLPS, FKPTAPAPAPVTSIAPSTSTATSTAS, NSTASSLNTATTKNDTSDWGSNDF, SNQKTSSAPQQPVSSVNSQL, SQSS…TQQQ, MHRQENSSSVPGPSQPSANPYY, and GMMQ…SSRM. The span at 1994 to 2008 shows a compositional bias: polar residues; sequence SQCNRSSKSHGNQAT. Over residues 2025–2045 the composition is skewed to low complexity; that stretch reads TPPTQTQTKQQPTPSPQVQQP. Residues 2057–2083 are compositionally biased toward polar residues; it reads SLAQSSVPQATENVTKPTQTPPASVQQ. Composition is skewed to low complexity over residues 2099 to 2119 and 2139 to 2148; these read QVVQPVPPVHQHTPVPQQRPQ and QQHMQQIQQQ. A compositionally biased stretch (pro residues) spans 2167–2179; it reads PGPPVQPQTPPQS. Low complexity predominate over residues 2269 to 2280; it reads NSTASSLNTATT. A compositionally biased stretch (polar residues) spans 2281–2292; sequence KNDTSDWGSNDF. Composition is skewed to low complexity over residues 2361–2373 and 2391–2417; these read QHQQQQQRIMQDP and PQQFQQPQFSSQSHPSQSSMMPSTQQQ. Composition is skewed to polar residues over residues 2449–2465, 2565–2574, and 2583–2595; these read NSSSVPGPSQPSANPYY, RSASGSSQNR, and QQPQPFSQLTQAD. The span at 2599 to 2615 shows a compositional bias: low complexity; sequence RLLLQQQQQQRSSQQQQ. The span at 2616–2636 shows a compositional bias: polar residues; the sequence is NPTNQGLPQKWSNTWNSSSRM.

Belongs to the mask family.

It is found in the cytoplasm. The chain is Ankyrin repeat and KH domain-containing protein CBG24701 from Caenorhabditis briggsae.